A 930-amino-acid polypeptide reads, in one-letter code: Isoleucine--tRNA ligase (930 aa).

Positions 57 to 67 (PYANGNIHVGH) match the 'HIGH' region motif. L-isoleucyl-5'-AMP is bound at residue Glu-554. The 'KMSKS' region motif lies at 595-599 (KMSKS). Lys-598 is an ATP binding site. Positions 888, 891, 908, and 911 each coordinate Zn(2+).

Belongs to the class-I aminoacyl-tRNA synthetase family. IleS type 1 subfamily. Monomer. It depends on Zn(2+) as a cofactor.

Its subcellular location is the cytoplasm. The enzyme catalyses tRNA(Ile) + L-isoleucine + ATP = L-isoleucyl-tRNA(Ile) + AMP + diphosphate. Its function is as follows. Catalyzes the attachment of isoleucine to tRNA(Ile). As IleRS can inadvertently accommodate and process structurally similar amino acids such as valine, to avoid such errors it has two additional distinct tRNA(Ile)-dependent editing activities. One activity is designated as 'pretransfer' editing and involves the hydrolysis of activated Val-AMP. The other activity is designated 'posttransfer' editing and involves deacylation of mischarged Val-tRNA(Ile). This chain is Isoleucine--tRNA ligase, found in Streptococcus sanguinis (strain SK36).